The chain runs to 496 residues: Glutamate--tRNA ligase (496 aa).

The short motif at 12–22 (PSPTGHLHIGN) is the 'HIGH' region element. Positions 259–263 (KLSKR) match the 'KMSKS' region motif. K262 serves as a coordination point for ATP.

This sequence belongs to the class-I aminoacyl-tRNA synthetase family. Glutamate--tRNA ligase type 1 subfamily. As to quaternary structure, monomer.

It is found in the cytoplasm. It carries out the reaction tRNA(Glu) + L-glutamate + ATP = L-glutamyl-tRNA(Glu) + AMP + diphosphate. Its function is as follows. Catalyzes the attachment of glutamate to tRNA(Glu) in a two-step reaction: glutamate is first activated by ATP to form Glu-AMP and then transferred to the acceptor end of tRNA(Glu). This chain is Glutamate--tRNA ligase, found in Lactiplantibacillus plantarum (strain ATCC BAA-793 / NCIMB 8826 / WCFS1) (Lactobacillus plantarum).